The following is a 618-amino-acid chain: DNA mismatch repair protein MutL (618 aa).

The segment covering 366–381 (AEPTAAREPATPRYSG) has biased composition (low complexity). Residues 366–405 (AEPTAAREPATPRYSGGTSGGNGGRQSAGGWPHAQPGYQK) are disordered. Residues 382–392 (GTSGGNGGRQS) are compositionally biased toward gly residues.

Belongs to the DNA mismatch repair MutL/HexB family.

Its function is as follows. This protein is involved in the repair of mismatches in DNA. It is required for dam-dependent methyl-directed DNA mismatch repair. May act as a 'molecular matchmaker', a protein that promotes the formation of a stable complex between two or more DNA-binding proteins in an ATP-dependent manner without itself being part of a final effector complex. This chain is DNA mismatch repair protein MutL, found in Salmonella agona (strain SL483).